A 501-amino-acid polypeptide reads, in one-letter code: Solute carrier family 2, facilitated glucose transporter member 5 (501 aa).

N-acetylmethionine is present on M1. At 1 to 18 (MEPQDPVKREGRLTPVIV) the chain is on the cytoplasmic side. Residues 19–39 (LATLIAAFGSSFQYGYNVATI) traverse the membrane as a helical segment. Y32 provides a ligand contact to D-fructose. Topologically, residues 40-68 (NSPSEFMKDFYNYTYYDRVGEYMNEFYLT) are extracellular. N-linked (GlcNAc...) asparagine glycosylation occurs at N51. Residues 69 to 91 (LLWSVTVSMFPFGGFLGSLMVGP) form a helical membrane-spanning segment. The Cytoplasmic segment spans residues 92–98 (LVNNLGR). The helical transmembrane segment at 99 to 119 (KGTLLFNNIFSIVPALLMGFS) threads the bilayer. Residues 120–126 (DLAKSFE) lie on the Extracellular side of the membrane. A helical transmembrane segment spans residues 127–149 (MIIVARVLVGICAGLSSNVVPMY). Over 150–161 (LGELAPKNWRGA) the chain is Cytoplasmic. A helical transmembrane segment spans residues 162-182 (LGVVPQLFITIGILVAQIFGL). A D-fructose-binding site is contributed by Q167. The Extracellular portion of the chain corresponds to 183–192 (RSLLANEEGW). The chain crosses the membrane as a helical span at residues 193–213 (PILLGLTGIPAVLQLLFLPFF). Over 214–277 (PESPRYLLIQ…LFKMRSLRWQ (64 aa)) the chain is Cytoplasmic. The chain crosses the membrane as a helical span at residues 278–298 (VISIIVLMAGQQLSGVNAIYY). D-fructose contacts are provided by residues Q288 and 296-298 (IYY). The Extracellular portion of the chain corresponds to 299 to 313 (YADQIYLSAGVKEDD). A helical membrane pass occupies residues 314–334 (VQYVTAGTGAVNVLITVCAIF). At 335-342 (VVELMGRR) the chain is on the cytoplasmic side. A helical membrane pass occupies residues 343-363 (FLLLLGFSVCFTACCVLTGAL). Over 364-371 (AMQDVISW) the chain is Extracellular. Residues 372 to 394 (MPYVSIACVISYVIGHALGPSPI) form a helical membrane-spanning segment. H387 lines the D-fructose pocket. Residues 395–412 (PALLVTEIFLQSSRPAAY) are Cytoplasmic-facing. A helical membrane pass occupies residues 413-433 (MVAGTVHWLSNFTVGLVFPFI). Residue 419-420 (HW) coordinates D-fructose. Residues 434-439 (QVGLGA) are Extracellular-facing. The chain crosses the membrane as a helical span at residues 440–460 (YSFVIFAVICFLTTVYIFLII). The Cytoplasmic segment spans residues 461 to 501 (PETKSKTFIEINQIFIKMNKVPGVHPEKEELKEFPPSTARQ).

This sequence belongs to the major facilitator superfamily. Sugar transporter (TC 2.A.1.1) family. Glucose transporter subfamily.

It localises to the apical cell membrane. It is found in the cell membrane. The protein localises to the sarcolemma. It catalyses the reaction D-fructose(out) = D-fructose(in). Functionally, functions as a fructose transporter that has only low activity with other monosaccharides. Can mediate the uptake of deoxyglucose, but with low efficiency. Essential for fructose uptake in the small intestine. Plays a role in the regulation of salt uptake and blood pressure in response to dietary fructose. Required for the development of high blood pressure in response to high dietary fructose intake. The polypeptide is Solute carrier family 2, facilitated glucose transporter member 5 (Ovis aries (Sheep)).